The following is a 430-amino-acid chain: Enolase (430 aa).

Glutamine 162 is a (2R)-2-phosphoglycerate binding site. Residue glutamate 204 is the Proton donor of the active site. Residues aspartate 241, glutamate 283, and aspartate 310 each coordinate Mg(2+). Positions 335, 364, 365, and 386 each coordinate (2R)-2-phosphoglycerate. The active-site Proton acceptor is lysine 335.

The protein belongs to the enolase family. The cofactor is Mg(2+).

It is found in the cytoplasm. It localises to the secreted. Its subcellular location is the cell surface. The enzyme catalyses (2R)-2-phosphoglycerate = phosphoenolpyruvate + H2O. It participates in carbohydrate degradation; glycolysis; pyruvate from D-glyceraldehyde 3-phosphate: step 4/5. In terms of biological role, catalyzes the reversible conversion of 2-phosphoglycerate (2-PG) into phosphoenolpyruvate (PEP). It is essential for the degradation of carbohydrates via glycolysis. This is Enolase from Mycobacteroides abscessus (strain ATCC 19977 / DSM 44196 / CCUG 20993 / CIP 104536 / JCM 13569 / NCTC 13031 / TMC 1543 / L948) (Mycobacterium abscessus).